The following is a 112-amino-acid chain: Nitrogen regulatory protein P-II (112 aa).

At tyrosine 51 the chain carries O-UMP-tyrosine.

The protein belongs to the P(II) protein family. As to quaternary structure, homotrimer.

Functionally, in nitrogen-limiting conditions, when the ratio of Gln to 2-ketoglutarate decreases, P-II is uridylylated to P-II-UMP. P-II-UMP allows the deadenylation of glutamine synthetase (GS), thus activating the enzyme. Conversely, in nitrogen excess P-II is deuridylated and promotes the adenylation of GS. P-II indirectly controls the transcription of the GS gene (glnA). P-II prevents NR-II-catalyzed conversion of NR-I to NR-I-phosphate, the transcriptional activator of glnA. When P-II is uridylylated to P-II-UMP, these events are reversed. The chain is Nitrogen regulatory protein P-II (glnB) from Rhizobium etli (strain ATCC 51251 / DSM 11541 / JCM 21823 / NBRC 15573 / CFN 42).